The primary structure comprises 580 residues: External alternative NAD(P)H-ubiquinone oxidoreductase B3, mitochondrial (580 aa).

The N-terminal 38 residues, methionine 1–serine 38, are a transit peptide targeting the mitochondrion. Lysine 57 to arginine 87 provides a ligand contact to FAD. Leucine 221–leucine 257 lines the NAD(+) pocket. An EF-hand domain is found at lysine 377–arginine 412. Positions 390, 394, 396, and 401 each coordinate Ca(2+). The Microbody targeting signal motif lies at phenylalanine 571–isoleucine 580.

This sequence belongs to the NADH dehydrogenase family. It depends on FAD as a cofactor. Expressed at low levels in seedlings, roots, stems, buds and flowers and, to a lower extent, in leaves and cotyledons.

Its subcellular location is the mitochondrion inner membrane. The protein localises to the peroxisome. The enzyme catalyses a quinone + NADH + H(+) = a quinol + NAD(+). It carries out the reaction a ubiquinone + NADH + H(+) = a ubiquinol + NAD(+). In terms of biological role, alternative NADH-ubiquinone oxidoreductase which catalyzes the oxidation of mitochondrial NADH does not translocate protons across the inner mitochondrial membrane. The chain is External alternative NAD(P)H-ubiquinone oxidoreductase B3, mitochondrial (NDB3) from Arabidopsis thaliana (Mouse-ear cress).